Reading from the N-terminus, the 102-residue chain is NADH-quinone oxidoreductase subunit K (102 aa).

3 helical membrane passes run 6–26, 30–50, and 62–82; these read LEHG…GLMV, ILFV…AFVV, and VMFI…LAIL.

It belongs to the complex I subunit 4L family. NDH-1 is composed of 13 different subunits. Subunits NuoA, H, J, K, L, M, N constitute the membrane sector of the complex.

The protein localises to the cell inner membrane. The catalysed reaction is a quinone + NADH + 5 H(+)(in) = a quinol + NAD(+) + 4 H(+)(out). Functionally, NDH-1 shuttles electrons from NADH, via FMN and iron-sulfur (Fe-S) centers, to quinones in the respiratory chain. The immediate electron acceptor for the enzyme in this species is believed to be ubiquinone. Couples the redox reaction to proton translocation (for every two electrons transferred, four hydrogen ions are translocated across the cytoplasmic membrane), and thus conserves the redox energy in a proton gradient. This chain is NADH-quinone oxidoreductase subunit K, found in Pseudomonas putida (strain ATCC 700007 / DSM 6899 / JCM 31910 / BCRC 17059 / LMG 24140 / F1).